We begin with the raw amino-acid sequence, 173 residues long: Shikimate kinase 1 (173 aa).

An ATP-binding site is contributed by 14 to 19 (GAGKST). Residue Ser18 coordinates Mg(2+). Substrate-binding residues include Asp36, Arg60, and Gly82. Arg120 is an ATP binding site. Arg140 is a substrate binding site. Gln157 serves as a coordination point for ATP.

This sequence belongs to the shikimate kinase family. As to quaternary structure, monomer. The cofactor is Mg(2+).

It is found in the cytoplasm. It carries out the reaction shikimate + ATP = 3-phosphoshikimate + ADP + H(+). It participates in metabolic intermediate biosynthesis; chorismate biosynthesis; chorismate from D-erythrose 4-phosphate and phosphoenolpyruvate: step 5/7. In terms of biological role, catalyzes the specific phosphorylation of the 3-hydroxyl group of shikimic acid using ATP as a cosubstrate. The chain is Shikimate kinase 1 from Enterobacter sp. (strain 638).